A 376-amino-acid polypeptide reads, in one-letter code: Chaperone protein DnaJ (376 aa).

Residues 4–68 (DYYEILGVAR…ETRARYDRFG (65 aa)) enclose the J domain. Residues 102-121 (GGMGGPTQQRRRGGPARGDD) are disordered. The CR-type zinc finger occupies 136 to 218 (GGEKEIRISH…CDGKGTNQVT (83 aa)). Zn(2+) contacts are provided by cysteine 149, cysteine 152, cysteine 166, cysteine 169, cysteine 192, cysteine 195, cysteine 206, and cysteine 209. 4 CXXCXGXG motif repeats span residues 149-156 (CETCSGSG), 166-173 (CSTCSGSG), 192-199 (CPTCNGTG), and 206-213 (CDACDGKG).

Belongs to the DnaJ family. In terms of assembly, homodimer. Zn(2+) serves as cofactor.

It localises to the cytoplasm. Participates actively in the response to hyperosmotic and heat shock by preventing the aggregation of stress-denatured proteins and by disaggregating proteins, also in an autonomous, DnaK-independent fashion. Unfolded proteins bind initially to DnaJ; upon interaction with the DnaJ-bound protein, DnaK hydrolyzes its bound ATP, resulting in the formation of a stable complex. GrpE releases ADP from DnaK; ATP binding to DnaK triggers the release of the substrate protein, thus completing the reaction cycle. Several rounds of ATP-dependent interactions between DnaJ, DnaK and GrpE are required for fully efficient folding. Also involved, together with DnaK and GrpE, in the DNA replication of plasmids through activation of initiation proteins. The polypeptide is Chaperone protein DnaJ (Trichormus variabilis (strain ATCC 29413 / PCC 7937) (Anabaena variabilis)).